A 361-amino-acid chain; its full sequence is Isopentenyl-diphosphate delta-isomerase (361 aa).

A substrate-binding site is contributed by R12–K13. Residues S70, S71 to T73, S101, and N130 contribute to the FMN site. Residue S101 to R103 participates in substrate binding. Position 165 (Q165) interacts with substrate. A Mg(2+)-binding site is contributed by E166. FMN is bound by residues K197 and A310–G311.

This sequence belongs to the IPP isomerase type 2 family. In terms of assembly, homooctamer. Dimer of tetramers. Requires FMN as cofactor. NADPH serves as cofactor. The cofactor is Mg(2+).

It localises to the cytoplasm. The catalysed reaction is isopentenyl diphosphate = dimethylallyl diphosphate. Functionally, involved in the biosynthesis of isoprenoids. Catalyzes the 1,3-allylic rearrangement of the homoallylic substrate isopentenyl (IPP) to its allylic isomer, dimethylallyl diphosphate (DMAPP). This is Isopentenyl-diphosphate delta-isomerase from Chlorobium luteolum (strain DSM 273 / BCRC 81028 / 2530) (Pelodictyon luteolum).